Here is a 514-residue protein sequence, read N- to C-terminus: FAD-dependent monooxygenase CPUR_05423 (514 aa).

Val-79 and Arg-146 together coordinate FAD. Residue Arg-227 is part of the active site. The FAD site is built by Asp-358 and Gly-371.

This sequence belongs to the paxM FAD-dependent monooxygenase family. The cofactor is FAD.

It participates in pigment biosynthesis. Its function is as follows. FAD-dependent monooxygenase; part of the ergochrome gene cluster responsible for the typical purple-black color of the ergot sclerotia. The ergochrome gene cluster produces several ergot pigments including the yellow ergochrome secalonic acid and its derivatives, as well as the red anthraquinones endocrocin and clavorubin. The pathway begins with the synthesis of atrochrysone thioester by the polyketide synthase (PKS) CPUR_05437. The atrochrysone carboxyl ACP thioesterase CPUR_05436 then breaks the thioester bond and releases the atrochrysone carboxylic acid from CPUR_05437. The atrochrysone carboxylic acid is then converted to atrochrysone which is further transformed into emodin anthrone. The next step is performed by the anthrone oxygenase CPUR_05434 that catalyzes the oxidation of emodinanthrone to emodin. Emodin is further modified to yield monodictyphenone via several steps involving CPUR_05427, CPUR_05428, CPUR_05429 and CPUR_05430. The short chain dehydrogenase/reductase CPUR_05418 then catalyzes the C-5 ketoreduction to give the xanthone skeleton of the monomeric units. Ergochromes formation requires further dimerization steps of different xanthone units, probably catalyzed by the cytochrome P450 monooxygenase CPUR_05419. CPUR_05425, CPUR_05426 and CPUR_05431 are unique to Claviceps, thus it is likely that they are involved in further modification of xanthone units or in their dimerization. The yellow ergochromes and the red anthraquinone pigments endocrocin and clavorubin are products from the same PKS derived precursors and the latter are likely shunt products in the pathway of xanthone biosynthesis. It is proposed that atrochrysone carboxylic acid released from the PKS CPUR_05437 can also be converted to endocrocin anthrone which is further oxidized into endocrocin by CPUR_05435. Endocrocin could be then modified to clavorubin, possibly by CPUR_05423 and CPUR_05431. Clavorubin is the principal anthraquinone metabolite produced by the cluster with a much higher yield compared to endocrocin. The chain is FAD-dependent monooxygenase CPUR_05423 from Claviceps purpurea (strain 20.1) (Ergot fungus).